The sequence spans 186 residues: MTGRCILQIALLVCFFTTAHSVSYKLLGFQLRSSSLECQELLVNLNRTSKYCLKDRMNFEVPEEIKKSQRFQKEEAILVINEMFQKIFNIFSRSTSSTGWNETTVENLLATLHWQKEHLETILEEIMEEENFTWDNTTLLNLKKYYLRIVRYLKAKEYSVCAWTVVHAEILRNFFFLERLTDYLQN.

The N-terminal stretch at 1 to 21 (MTGRCILQIALLVCFFTTAHS) is a signal peptide. Tyr24 is subject to Phosphotyrosine. Residues Asn46, Asn101, Asn131, and Asn136 are each glycosylated (N-linked (GlcNAc...) asparagine). Cys52 and Cys161 are joined by a disulfide.

Belongs to the alpha/beta interferon family. As to quaternary structure, monomer.

The protein localises to the secreted. Type I interferon cytokine that plays a key role in the innate immune response to infection, developing tumors and other inflammatory stimuli. Signals via binding to high-affinity (IFNAR2) and low-affinity (IFNAR1) heterodimeric receptor, activating the canonical Jak-STAT signaling pathway resulting in transcriptional activation or repression of interferon-regulated genes that encode the effectors of the interferon response, such as antiviral proteins, regulators of cell proliferation and differentiation, and immunoregulatory proteins. Signals mostly via binding to a IFNAR1-IFNAR2 heterodimeric receptor, but can also function with IFNAR1 alone and independently of Jak-STAT pathways. Elicits a wide variety of responses, including antiviral and antibacterial activities, and can regulate the development of B-cells, myelopoiesis and lipopolysaccharide (LPS)-inducible production of tumor necrosis factor. Plays a role in neuronal homeostasis by regulating dopamine turnover and protecting dopaminergic neurons: acts by promoting neuronal autophagy and alpha-synuclein clearance, thereby preventing dopaminergic neuron loss. IFNB1 is more potent than interferon-alpha (IFN-alpha) in inducing the apoptotic and antiproliferative pathways required for control of tumor cell growth. The sequence is that of Interferon beta (IFNB1) from Felis catus (Cat).